We begin with the raw amino-acid sequence, 261 residues long: Ribosomal RNA large subunit methyltransferase E (261 aa).

S-adenosyl-L-methionine is bound by residues Gly81, Trp83, Asp104, Asp120, and Asp144. The active-site Proton acceptor is Lys184. The disordered stretch occupies residues 233–261 (GNALGHEVEDDGPMPHDPREDATADEDQD). Residues 245 to 254 (PMPHDPREDA) are compositionally biased toward basic and acidic residues.

It belongs to the class I-like SAM-binding methyltransferase superfamily. RNA methyltransferase RlmE family.

Its subcellular location is the cytoplasm. The catalysed reaction is uridine(2552) in 23S rRNA + S-adenosyl-L-methionine = 2'-O-methyluridine(2552) in 23S rRNA + S-adenosyl-L-homocysteine + H(+). Specifically methylates the uridine in position 2552 of 23S rRNA at the 2'-O position of the ribose in the fully assembled 50S ribosomal subunit. The protein is Ribosomal RNA large subunit methyltransferase E of Allorhizobium ampelinum (strain ATCC BAA-846 / DSM 112012 / S4) (Agrobacterium vitis (strain S4)).